Reading from the N-terminus, the 244-residue chain is 5-oxoprolinase subunit A (244 aa).

Belongs to the LamB/PxpA family. As to quaternary structure, forms a complex composed of PxpA, PxpB and PxpC.

It carries out the reaction 5-oxo-L-proline + ATP + 2 H2O = L-glutamate + ADP + phosphate + H(+). In terms of biological role, catalyzes the cleavage of 5-oxoproline to form L-glutamate coupled to the hydrolysis of ATP to ADP and inorganic phosphate. The protein is 5-oxoprolinase subunit A of Shigella dysenteriae serotype 1 (strain Sd197).